The chain runs to 351 residues: Phosphoribosylformylglycinamidine cyclo-ligase (351 aa).

This sequence belongs to the AIR synthase family.

Its subcellular location is the cytoplasm. The catalysed reaction is 2-formamido-N(1)-(5-O-phospho-beta-D-ribosyl)acetamidine + ATP = 5-amino-1-(5-phospho-beta-D-ribosyl)imidazole + ADP + phosphate + H(+). It functions in the pathway purine metabolism; IMP biosynthesis via de novo pathway; 5-amino-1-(5-phospho-D-ribosyl)imidazole from N(2)-formyl-N(1)-(5-phospho-D-ribosyl)glycinamide: step 2/2. This is Phosphoribosylformylglycinamidine cyclo-ligase from Xylella fastidiosa (strain 9a5c).